The sequence spans 201 residues: dITP/XTP pyrophosphatase (201 aa).

Residue 8–13 (TNNENK) coordinates substrate. Mg(2+)-binding residues include E41 and D73. The Proton acceptor role is filled by D73. Substrate is bound by residues S74, 154–157 (FGYD), K177, and 182–183 (HR).

This sequence belongs to the HAM1 NTPase family. Homodimer. The cofactor is Mg(2+).

The catalysed reaction is XTP + H2O = XMP + diphosphate + H(+). It catalyses the reaction dITP + H2O = dIMP + diphosphate + H(+). The enzyme catalyses ITP + H2O = IMP + diphosphate + H(+). Its function is as follows. Pyrophosphatase that catalyzes the hydrolysis of nucleoside triphosphates to their monophosphate derivatives, with a high preference for the non-canonical purine nucleotides XTP (xanthosine triphosphate), dITP (deoxyinosine triphosphate) and ITP. Seems to function as a house-cleaning enzyme that removes non-canonical purine nucleotides from the nucleotide pool, thus preventing their incorporation into DNA/RNA and avoiding chromosomal lesions. The sequence is that of dITP/XTP pyrophosphatase from Clostridium tetani (strain Massachusetts / E88).